Reading from the N-terminus, the 390-residue chain is ATP phosphoribosyltransferase regulatory subunit (390 aa).

Belongs to the class-II aminoacyl-tRNA synthetase family. HisZ subfamily. Heteromultimer composed of HisG and HisZ subunits.

The protein resides in the cytoplasm. The protein operates within amino-acid biosynthesis; L-histidine biosynthesis; L-histidine from 5-phospho-alpha-D-ribose 1-diphosphate: step 1/9. Functionally, required for the first step of histidine biosynthesis. May allow the feedback regulation of ATP phosphoribosyltransferase activity by histidine. This Nitrosomonas eutropha (strain DSM 101675 / C91 / Nm57) protein is ATP phosphoribosyltransferase regulatory subunit.